The chain runs to 594 residues: UvrABC system protein C (594 aa).

The GIY-YIG domain maps to 14 to 91 (DSPGCYLHKD…IQENMPKYNI (78 aa)). In terms of domain architecture, UVR spans 196 to 231 (DKIIDDLRSKMLEASNKQEFERAAEYRDLISGIATM).

Belongs to the UvrC family. As to quaternary structure, interacts with UvrB in an incision complex.

The protein localises to the cytoplasm. In terms of biological role, the UvrABC repair system catalyzes the recognition and processing of DNA lesions. UvrC both incises the 5' and 3' sides of the lesion. The N-terminal half is responsible for the 3' incision and the C-terminal half is responsible for the 5' incision. In Streptococcus equi subsp. zooepidemicus (strain MGCS10565), this protein is UvrABC system protein C.